We begin with the raw amino-acid sequence, 43 residues long: Protein PsbN 2 (43 aa).

Residues 4–24 (ATILGISIAAALVGITVLALY) traverse the membrane as a helical segment.

This sequence belongs to the PsbN family.

The protein resides in the cellular thylakoid membrane. May play a role in photosystem I and II biogenesis. In Microcystis aeruginosa (strain NIES-843 / IAM M-2473), this protein is Protein PsbN 2.